The following is a 431-amino-acid chain: Histidine--tRNA ligase (431 aa).

It belongs to the class-II aminoacyl-tRNA synthetase family. As to quaternary structure, homodimer.

The protein resides in the cytoplasm. It catalyses the reaction tRNA(His) + L-histidine + ATP = L-histidyl-tRNA(His) + AMP + diphosphate + H(+). This chain is Histidine--tRNA ligase, found in Neisseria meningitidis serogroup A / serotype 4A (strain DSM 15465 / Z2491).